The primary structure comprises 565 residues: Proline--tRNA ligase (565 aa).

The protein belongs to the class-II aminoacyl-tRNA synthetase family. ProS type 1 subfamily. As to quaternary structure, homodimer.

The protein resides in the cytoplasm. It carries out the reaction tRNA(Pro) + L-proline + ATP = L-prolyl-tRNA(Pro) + AMP + diphosphate. In terms of biological role, catalyzes the attachment of proline to tRNA(Pro) in a two-step reaction: proline is first activated by ATP to form Pro-AMP and then transferred to the acceptor end of tRNA(Pro). As ProRS can inadvertently accommodate and process non-cognate amino acids such as alanine and cysteine, to avoid such errors it has two additional distinct editing activities against alanine. One activity is designated as 'pretransfer' editing and involves the tRNA(Pro)-independent hydrolysis of activated Ala-AMP. The other activity is designated 'posttransfer' editing and involves deacylation of mischarged Ala-tRNA(Pro). The misacylated Cys-tRNA(Pro) is not edited by ProRS. The protein is Proline--tRNA ligase of Bacillus pumilus (strain SAFR-032).